Consider the following 258-residue polypeptide: Maintenance of carboxysome distribution protein A (258 aa).

ATP-binding residues include Gly11, Gly12, Gln13, Gly14, Lys15, Thr16, Thr17, Gln40, Glu147, Lys151, Phe182, Arg183, Leu216, Glu217, Ser218, and Tyr221. Thr16 is a Mg(2+) binding site.

This sequence belongs to the ParA family. McdA subfamily. As to quaternary structure, homodimerizes in the presence of ATP, making extra nucleotide contacts than with ADP or AMP-PNP. Each subunit binds 1 ATP molecule; Glu-147, Lys-151 and Arg-183 cross the dimer interface to contact ATP in the other subunit, while Phe-182, Arg-183 and Tyr-221 stack with the adenine base in their own subunit. Forms a complex with McdB.

It localises to the cytoplasm. Its subcellular location is the nucleoid. It carries out the reaction ATP + H2O = ADP + phosphate + H(+). Its function is as follows. McdA and McdB together mediate carboxysome (Cb) spacing, size, ultrastructure and probably inheritance in the cell, together they prevent Cb aggregation. McdA is an ATPase that forms dynamic gradients on the nucleoid in response to adapter protein McdB, which associates with carboxysomes. The interplay between McdA gradients on the nucleoid and McdB-bound carboxysomes result in the equal spacing of Cbs along the cell length. Binds DNA saturably and strongly in the presence of Mg(2+)ATP; without ATP, DNA-binding is very poor (tested with a mutant that should not be able to hydrolyze ATP, Asp-38-Ala). Decreasing the NaCl concentration increases DNA binding. In terms of biological role, incorrect positioning (aggregation) of carboxysomes results in reduced CO(2) fixation by encapsulated ribulose-1,5-bisphosphate carboxylase (RuBisCO, cbbL/cbbS), which leads to slower growth. This Gloeothece citriformis (strain PCC 7424) (Cyanothece sp. (strain PCC 7424)) protein is Maintenance of carboxysome distribution protein A.